The chain runs to 581 residues: Proline--tRNA ligase (581 aa).

It belongs to the class-II aminoacyl-tRNA synthetase family. ProS type 1 subfamily. In terms of assembly, homodimer.

It localises to the cytoplasm. The catalysed reaction is tRNA(Pro) + L-proline + ATP = L-prolyl-tRNA(Pro) + AMP + diphosphate. In terms of biological role, catalyzes the attachment of proline to tRNA(Pro) in a two-step reaction: proline is first activated by ATP to form Pro-AMP and then transferred to the acceptor end of tRNA(Pro). As ProRS can inadvertently accommodate and process non-cognate amino acids such as alanine and cysteine, to avoid such errors it has two additional distinct editing activities against alanine. One activity is designated as 'pretransfer' editing and involves the tRNA(Pro)-independent hydrolysis of activated Ala-AMP. The other activity is designated 'posttransfer' editing and involves deacylation of mischarged Ala-tRNA(Pro). The misacylated Cys-tRNA(Pro) is not edited by ProRS. The sequence is that of Proline--tRNA ligase from Rhodococcus opacus (strain B4).